The sequence spans 198 residues: Leucyl/phenylalanyl-tRNA--protein transferase (198 aa).

This sequence belongs to the L/F-transferase family.

The protein localises to the cytoplasm. It carries out the reaction N-terminal L-lysyl-[protein] + L-leucyl-tRNA(Leu) = N-terminal L-leucyl-L-lysyl-[protein] + tRNA(Leu) + H(+). The enzyme catalyses N-terminal L-arginyl-[protein] + L-leucyl-tRNA(Leu) = N-terminal L-leucyl-L-arginyl-[protein] + tRNA(Leu) + H(+). The catalysed reaction is L-phenylalanyl-tRNA(Phe) + an N-terminal L-alpha-aminoacyl-[protein] = an N-terminal L-phenylalanyl-L-alpha-aminoacyl-[protein] + tRNA(Phe). Functionally, functions in the N-end rule pathway of protein degradation where it conjugates Leu, Phe and, less efficiently, Met from aminoacyl-tRNAs to the N-termini of proteins containing an N-terminal arginine or lysine. The protein is Leucyl/phenylalanyl-tRNA--protein transferase of Synechocystis sp. (strain ATCC 27184 / PCC 6803 / Kazusa).